A 274-amino-acid chain; its full sequence is Cytochrome b-c1 complex subunit Rieske, mitochondrial (274 aa).

Residues 29–49 (XXXXXXXXTPEPPVLDPKRPI) form a disordered region. The Mitochondrial matrix segment spans residues 79-103 (SHTDIKVPDFSDYRRSEVLDKTKSS). The helical transmembrane segment at 104–140 (RESSDARKVFSYMVTATTAVGVTYAAKSIVTQFISSM) threads the bilayer. The Mitochondrial intermembrane segment spans residues 141–274 (SASADVLAMS…FLSDDMVVVG (134 aa)). Residues 187 to 272 (EAAVELSQLR…YEFLSDDMVV (86 aa)) enclose the Rieske domain. Residues C217, H219, C236, H239, and S241 each coordinate [2Fe-2S] cluster. C222 and C238 are oxidised to a cystine.

This sequence belongs to the Rieske iron-sulfur protein family. In terms of assembly, component of the ubiquinol-cytochrome c oxidoreductase (cytochrome b-c1 complex, complex III, CIII), a multisubunit enzyme composed of 11 subunits. The complex is composed of 3 respiratory subunits cytochrome b, cytochrome c1 and Rieske protein UQCRFS1, 2 core protein subunits UQCRC1/QCR1 and UQCRC2/QCR2, and 6 low-molecular weight protein subunits UQCRH/QCR6, UQCRB/QCR7, UQCRQ/QCR8, UQCR10/QCR9, UQCR11/QCR10 and subunit 9, the cleavage product of Rieske protein UQCRFS1. The complex exists as an obligatory dimer and forms supercomplexes (SCs) in the inner mitochondrial membrane with NADH-ubiquinone oxidoreductase (complex I, CI) and cytochrome c oxidase (complex IV, CIV), resulting in different assemblies (supercomplex SCI(1)III(2)IV(1) and megacomplex MCI(2)III(2)IV(2)). Incorporation of the Rieske protein UQCRFS1 is the penultimate step in complex III assembly. Interacts with TTC19, which is involved in the clearance of UQCRFS1 fragments. As to quaternary structure, component of the ubiquinol-cytochrome c oxidoreductase (cytochrome b-c1 complex, complex III, CIII). Subunit 9 corresponds to the mitochondrial targeting sequence (MTS) of Rieske protein UQCRFS1. It is retained after processing and incorporated inside complex III, where it remains bound to the complex and localizes between the 2 core subunits UQCRC1/QCR1 and UQCRC2/QCR2. [2Fe-2S] cluster is required as a cofactor. Post-translationally, proteolytic processing is necessary for the correct insertion of UQCRFS1 in the complex III dimer. Several fragments are generated during UQCRFS1 insertion, most probably due to the endogenous matrix-processing peptidase (MPP) activity of the 2 core protein subunits UQCRC1/QCR1 and UQCRC2/QCR2, which are homologous to the 2 mitochondrial-processing peptidase (MPP) subunits beta-MPP and alpha-MPP respectively. The action of the protease is also necessary for the clearance of the UQCRFS1 fragments.

The protein resides in the mitochondrion inner membrane. The enzyme catalyses a quinol + 2 Fe(III)-[cytochrome c](out) = a quinone + 2 Fe(II)-[cytochrome c](out) + 2 H(+)(out). Functionally, component of the ubiquinol-cytochrome c oxidoreductase, a multisubunit transmembrane complex that is part of the mitochondrial electron transport chain which drives oxidative phosphorylation. The respiratory chain contains 3 multisubunit complexes succinate dehydrogenase (complex II, CII), ubiquinol-cytochrome c oxidoreductase (cytochrome b-c1 complex, complex III, CIII) and cytochrome c oxidase (complex IV, CIV), that cooperate to transfer electrons derived from NADH and succinate to molecular oxygen, creating an electrochemical gradient over the inner membrane that drives transmembrane transport and the ATP synthase. The cytochrome b-c1 complex catalyzes electron transfer from ubiquinol to cytochrome c, linking this redox reaction to translocation of protons across the mitochondrial inner membrane, with protons being carried across the membrane as hydrogens on the quinol. In the process called Q cycle, 2 protons are consumed from the matrix, 4 protons are released into the intermembrane space and 2 electrons are passed to cytochrome c. The Rieske protein is a catalytic core subunit containing a [2Fe-2S] iron-sulfur cluster. It cycles between 2 conformational states during catalysis to transfer electrons from the quinol bound in the Q(0) site in cytochrome b to cytochrome c1. Incorporation of UQCRFS1 is the penultimate step in complex III assembly. In terms of biological role, component of the ubiquinol-cytochrome c oxidoreductase (cytochrome b-c1 complex, complex III, CIII). UQCRFS1 undergoes proteolytic processing once it is incorporated in the complex III dimer. One of the fragments, called subunit 9, corresponds to its mitochondrial targeting sequence (MTS). The proteolytic processing is necessary for the correct insertion of UQCRFS1 in the complex III dimer, but the persistence of UQCRFS1-derived fragments may prevent newly imported UQCRFS1 to be processed and assembled into complex III and is detrimental for the complex III structure and function. The polypeptide is Cytochrome b-c1 complex subunit Rieske, mitochondrial (UQCRFS1) (Saimiri sciureus (Common squirrel monkey)).